A 157-amino-acid polypeptide reads, in one-letter code: 3-hydroxyacyl-[acyl-carrier-protein] dehydratase FabZ (157 aa).

Residue histidine 58 is part of the active site.

It belongs to the thioester dehydratase family. FabZ subfamily.

Its subcellular location is the cytoplasm. It catalyses the reaction a (3R)-hydroxyacyl-[ACP] = a (2E)-enoyl-[ACP] + H2O. Its function is as follows. Involved in unsaturated fatty acids biosynthesis. Catalyzes the dehydration of short chain beta-hydroxyacyl-ACPs and long chain saturated and unsaturated beta-hydroxyacyl-ACPs. This is 3-hydroxyacyl-[acyl-carrier-protein] dehydratase FabZ from Brucella ovis (strain ATCC 25840 / 63/290 / NCTC 10512).